We begin with the raw amino-acid sequence, 542 residues long: MTSLFFYQISDKQKRWNWYWKLALAIIVLVVIIYSFIDNFSGFNVSGFRNFSRNFIRLFTPDTARDYFLGSYLLQTIFYVVSGSILGFVIALWFSYLTAFKIQPLYIALPTRLFTIFLRSFPVLVFAFLFNNLFNKQLTATLTITWFSWLWSTKYITAFFENSALKQFFNQSSRYIHKFKAFWNTVVISQAERLWLFLLYSLEANFRWTTVLSIAGITGIGELIATPLGGTVQLNLVLIPMLTLIGFLLFLEASVFLLTKFVLQKQSQAGDYFLQAKTLQKRKWKKVMIYILALVLAAFTLANLVQLDYTVKAPGFVADFFKQFFQTKTAFLISEDANINPLLMLLKLTTQAISLITLVFVLALLFGFLASKLFSTITSISLKLLLLVIRVIPSVLLFRLFDPIIFRPETTIIFVLAIHSAASYGQLITINFDNANEGVINNMQNHGFSRFYILWNYLIPTTKPQLLNTLSDSFDNAIRDLVVFGIFGGSIIGGRINNFFERAQYSELGTITLPLMVYLMVFEVILMAVRLNKLKVWQRHLW.

The next 12 membrane-spanning stretches (helical) occupy residues 23-43 (ALAI…FSGF), 77-97 (IFYV…FSYL), 114-134 (FTIF…NNLF), 140-160 (ATLT…TAFF), 212-232 (LSIA…GGTV), 236-256 (LVLI…ASVF), 287-307 (VMIY…LVQL), 350-370 (TQAI…GFLA), 386-406 (LLVI…PIIF), 412-432 (IIFV…TINF), 481-501 (LVVF…NFFE), and 509-529 (GTIT…LMAV). The ABC transmembrane type-1 domain occupies 349-526 (TTQAISLITL…VYLMVFEVIL (178 aa)).

Belongs to the binding-protein-dependent transport system permease family.

The protein resides in the cell membrane. In terms of biological role, probably part of a high-affinity transport system. This is ABC transport system permease protein p69 (p69) from Mycoplasma pneumoniae (strain ATCC 29342 / M129 / Subtype 1) (Mycoplasmoides pneumoniae).